Reading from the N-terminus, the 321-residue chain is tRNA-dihydrouridine synthase B (321 aa).

FMN-binding positions include 16-18 and glutamine 70; that span reads PMA. Residue cysteine 100 is the Proton donor of the active site. Residues lysine 139, 200–202, and 224–225 contribute to the FMN site; these read NGD and GR.

This sequence belongs to the Dus family. DusB subfamily. Requires FMN as cofactor.

The enzyme catalyses a 5,6-dihydrouridine in tRNA + NAD(+) = a uridine in tRNA + NADH + H(+). It catalyses the reaction a 5,6-dihydrouridine in tRNA + NADP(+) = a uridine in tRNA + NADPH + H(+). Functionally, catalyzes the synthesis of 5,6-dihydrouridine (D), a modified base found in the D-loop of most tRNAs, via the reduction of the C5-C6 double bond in target uridines. This chain is tRNA-dihydrouridine synthase B, found in Yersinia pestis.